The sequence spans 305 residues: MNRANFGLIKLVTYIPNVGEQSKRLGALLENSIIDLCSADKSIPNDMRSFLSLNSTDKWSKVINVINNINNRRIPIENCKIKAPIEPGKIICIGLNYKEHANEAKMAIPKEPIVFSKFDNAICGPNDSIIKPVESDEVDYEVELVVVIGKQAKNVSESDALQYVAGYTVGNDVSARDWQLRKNNSQWLLGKTFDTFAPIGPSIVINPEVAALSDDTYFDPNNLSIKCTLNGQVVQNSTTKEFIFNIQTVVSYLSKLFTLNPGDIIFTGTPSGVGFIRKPNPIFLKSGDVIKCEIEELGSLVNNVK.

A divalent metal cation is bound by residues Glu-141, Glu-143, and Asp-172.

Belongs to the FAH family. The cofactor is Ca(2+). It depends on Mg(2+) as a cofactor.

Its function is as follows. May have hydrolase activity. This Dictyostelium discoideum (Social amoeba) protein is Fumarylacetoacetate hydrolase domain-containing protein 2 homolog (fahd2).